Consider the following 183-residue polypeptide: Large ribosomal subunit protein mL43 (183 aa).

2 disordered regions span residues 120–144 and 162–183; these read HTDN…TGCG and PGAL…AQAE. The span at 122–139 shows a compositional bias: polar residues; it reads DNPSIQGQWTPSPTNGLP. Residues 162 to 172 are compositionally biased toward basic and acidic residues; it reads PGALDRERDRI.

The protein belongs to the mitochondrion-specific ribosomal protein mL43 family. In terms of assembly, component of the mitochondrial ribosome large subunit (39S) which comprises a 16S rRNA and about 50 distinct proteins. In terms of tissue distribution, ubiquitous with the highest levels in the liver, heart and kidneys. The skeletal muscle, brain and testis showed lower but detectable expression. Expression is coregulated with TWNK.

It is found in the mitochondrion. The polypeptide is Large ribosomal subunit protein mL43 (Mrpl43) (Mus musculus (Mouse)).